Reading from the N-terminus, the 401-residue chain is F-box protein At2g43440 (401 aa).

Positions 7–53 (NTNSIYIVPELLEDIFLRLPLKSILKFKTVSRQWRSILESKLFVERR) constitute an F-box domain.

The protein is F-box protein At2g43440 of Arabidopsis thaliana (Mouse-ear cress).